The chain runs to 210 residues: MPSRSKSSQRWLKEHFADPFVKKAQAEGMRSRAAYKLEELLQRDRLLKPGMVVVDLGAAPGGWSQQVRKSMGASGRVVALDILEMPPLAGVEFLHGDFREQAVLSEFEAMLGDVPVDLVLSDMAPNKSGMDAVDQPRMMHLAELAMEFADTHLKVGGAFLIKLFQGVGSDDYIRELRRRYEKVTIRKPAASRKRSAEVYVLGQGKRAQIK.

G61, W63, D81, D97, and D122 together coordinate S-adenosyl-L-methionine. K162 serves as the catalytic Proton acceptor.

It belongs to the class I-like SAM-binding methyltransferase superfamily. RNA methyltransferase RlmE family.

It is found in the cytoplasm. The enzyme catalyses uridine(2552) in 23S rRNA + S-adenosyl-L-methionine = 2'-O-methyluridine(2552) in 23S rRNA + S-adenosyl-L-homocysteine + H(+). Functionally, specifically methylates the uridine in position 2552 of 23S rRNA at the 2'-O position of the ribose in the fully assembled 50S ribosomal subunit. This Xanthomonas campestris pv. campestris (strain 8004) protein is Ribosomal RNA large subunit methyltransferase E.